The sequence spans 205 residues: Probable GTP-binding protein EngB (205 aa).

In terms of domain architecture, EngB-type G spans 29-203 (QGAEIAFIGR…KAVLSQWFRS (175 aa)). Residues 37–44 (GRSNAGKS), 64–68 (GRTQM), 82–85 (DLPG), 149–152 (TKSD), and 182–184 (FSS) contribute to the GTP site. 2 residues coordinate Mg(2+): serine 44 and threonine 66.

The protein belongs to the TRAFAC class TrmE-Era-EngA-EngB-Septin-like GTPase superfamily. EngB GTPase family. Mg(2+) serves as cofactor.

Necessary for normal cell division and for the maintenance of normal septation. The chain is Probable GTP-binding protein EngB from Coxiella burnetii (strain CbuG_Q212) (Coxiella burnetii (strain Q212)).